A 296-amino-acid chain; its full sequence is Ribosomal RNA small subunit methyltransferase H (296 aa).

S-adenosyl-L-methionine contacts are provided by residues 38 to 40 (GAH), Glu-57, Phe-80, Asp-103, and His-110.

It belongs to the methyltransferase superfamily. RsmH family.

Its subcellular location is the cytoplasm. It carries out the reaction cytidine(1402) in 16S rRNA + S-adenosyl-L-methionine = N(4)-methylcytidine(1402) in 16S rRNA + S-adenosyl-L-homocysteine + H(+). Specifically methylates the N4 position of cytidine in position 1402 (C1402) of 16S rRNA. In Borrelia garinii subsp. bavariensis (strain ATCC BAA-2496 / DSM 23469 / PBi) (Borreliella bavariensis), this protein is Ribosomal RNA small subunit methyltransferase H.